The chain runs to 341 residues: Porin-like protein L (341 aa).

A signal peptide spans 1–21; that stretch reads MNKKLIALAVAAASISSVATA.

It belongs to the Gram-negative porin family. As to quaternary structure, homotrimer.

Its subcellular location is the cell outer membrane. Forms pores that allow passive diffusion of small molecules across the outer membrane. This Photobacterium profundum (strain SS9) protein is Porin-like protein L (ompL).